A 184-amino-acid chain; its full sequence is Large ribosomal subunit protein bL9 (184 aa).

A disordered region spans residues 156–184 (RQAKLQNQKSEQQEAEQDASKEAADADDS). Positions 173–184 (DASKEAADADDS) are enriched in basic and acidic residues.

The protein belongs to the bacterial ribosomal protein bL9 family.

Binds to the 23S rRNA. The chain is Large ribosomal subunit protein bL9 from Wolbachia pipientis subsp. Culex pipiens (strain wPip).